A 199-amino-acid chain; its full sequence is Superoxide dismutase [Mn] 2 (199 aa).

Mn(2+)-binding residues include His28, His75, Asp157, and His161.

The protein belongs to the iron/manganese superoxide dismutase family. It depends on Mn(2+) as a cofactor.

It catalyses the reaction 2 superoxide + 2 H(+) = H2O2 + O2. Its function is as follows. Destroys superoxide anion radicals which are normally produced within the cells and which are toxic to biological systems. The chain is Superoxide dismutase [Mn] 2 (sod2) from Haloferax volcanii (strain ATCC 29605 / DSM 3757 / JCM 8879 / NBRC 14742 / NCIMB 2012 / VKM B-1768 / DS2) (Halobacterium volcanii).